The chain runs to 159 residues: 2-C-methyl-D-erythritol 2,4-cyclodiphosphate synthase (159 aa).

A divalent metal cation contacts are provided by D10 and H12. 4-CDP-2-C-methyl-D-erythritol 2-phosphate-binding positions include D10–H12 and H36–S37. Position 44 (H44) interacts with a divalent metal cation. 4-CDP-2-C-methyl-D-erythritol 2-phosphate-binding positions include D58 to G60, F63 to D67, A102 to A108, T134 to E137, F141, and R144.

Belongs to the IspF family. As to quaternary structure, homotrimer. A divalent metal cation is required as a cofactor.

It catalyses the reaction 4-CDP-2-C-methyl-D-erythritol 2-phosphate = 2-C-methyl-D-erythritol 2,4-cyclic diphosphate + CMP. It participates in isoprenoid biosynthesis; isopentenyl diphosphate biosynthesis via DXP pathway; isopentenyl diphosphate from 1-deoxy-D-xylulose 5-phosphate: step 4/6. In terms of biological role, involved in the biosynthesis of isopentenyl diphosphate (IPP) and dimethylallyl diphosphate (DMAPP), two major building blocks of isoprenoid compounds. Catalyzes the conversion of 4-diphosphocytidyl-2-C-methyl-D-erythritol 2-phosphate (CDP-ME2P) to 2-C-methyl-D-erythritol 2,4-cyclodiphosphate (ME-CPP) with a corresponding release of cytidine 5-monophosphate (CMP). This chain is 2-C-methyl-D-erythritol 2,4-cyclodiphosphate synthase, found in Cellvibrio japonicus (strain Ueda107) (Pseudomonas fluorescens subsp. cellulosa).